A 276-amino-acid chain; its full sequence is Hydroxyethylthiazole kinase (276 aa).

Residues M53 and A202 each coordinate substrate.

This sequence belongs to the Thz kinase family. Requires Mg(2+) as cofactor.

It carries out the reaction 5-(2-hydroxyethyl)-4-methylthiazole + ATP = 4-methyl-5-(2-phosphooxyethyl)-thiazole + ADP + H(+). It participates in cofactor biosynthesis; thiamine diphosphate biosynthesis; 4-methyl-5-(2-phosphoethyl)-thiazole from 5-(2-hydroxyethyl)-4-methylthiazole: step 1/1. Functionally, thiazole kinase involved in thiamine salvage pathway. The protein is Hydroxyethylthiazole kinase (THIM) of Arabidopsis thaliana (Mouse-ear cress).